Consider the following 290-residue polypeptide: 4-hydroxybenzoate octaprenyltransferase (290 aa).

The next 8 membrane-spanning stretches (helical) occupy residues isoleucine 23–methionine 43, leucine 46–valine 66, leucine 99–isoleucine 119, leucine 141–valine 161, glutamate 163–tyrosine 183, threonine 212–leucine 232, asparagine 233–glutamine 253, and alanine 268–tryptophan 288.

It belongs to the UbiA prenyltransferase family. Mg(2+) is required as a cofactor.

Its subcellular location is the cell inner membrane. The enzyme catalyses all-trans-octaprenyl diphosphate + 4-hydroxybenzoate = 4-hydroxy-3-(all-trans-octaprenyl)benzoate + diphosphate. The protein operates within cofactor biosynthesis; ubiquinone biosynthesis. Its function is as follows. Catalyzes the prenylation of para-hydroxybenzoate (PHB) with an all-trans polyprenyl group. Mediates the second step in the final reaction sequence of ubiquinone-8 (UQ-8) biosynthesis, which is the condensation of the polyisoprenoid side chain with PHB, generating the first membrane-bound Q intermediate 3-octaprenyl-4-hydroxybenzoate. The protein is 4-hydroxybenzoate octaprenyltransferase of Salmonella typhi.